We begin with the raw amino-acid sequence, 241 residues long: GTP cyclohydrolase 1 type 2 homolog (241 aa).

A divalent metal cation contacts are provided by H62, H63, D101, H207, and E211.

It belongs to the GTP cyclohydrolase I type 2/NIF3 family. As to quaternary structure, homohexamer.

The sequence is that of GTP cyclohydrolase 1 type 2 homolog from Campylobacter jejuni subsp. jejuni serotype O:2 (strain ATCC 700819 / NCTC 11168).